The following is a 600-amino-acid chain: Aspartate--tRNA(Asp/Asn) ligase (600 aa).

Residue E187 coordinates L-aspartate. Residues 211–214 are aspartate; the sequence is QIFK. The L-aspartate site is built by R233 and H463. Position 233-235 (233-235) interacts with ATP; sequence RDE. E497 contributes to the ATP binding site. R504 provides a ligand contact to L-aspartate. 549–552 is an ATP binding site; the sequence is GIDR.

This sequence belongs to the class-II aminoacyl-tRNA synthetase family. Type 1 subfamily. In terms of assembly, homodimer.

The protein resides in the cytoplasm. It carries out the reaction tRNA(Asx) + L-aspartate + ATP = L-aspartyl-tRNA(Asx) + AMP + diphosphate. Aspartyl-tRNA synthetase with relaxed tRNA specificity since it is able to aspartylate not only its cognate tRNA(Asp) but also tRNA(Asn). Reaction proceeds in two steps: L-aspartate is first activated by ATP to form Asp-AMP and then transferred to the acceptor end of tRNA(Asp/Asn). The polypeptide is Aspartate--tRNA(Asp/Asn) ligase (Wolbachia sp. subsp. Brugia malayi (strain TRS)).